The primary structure comprises 283 residues: Bifunctional protein FolD (283 aa).

Residues 166 to 168 and Ile232 contribute to the NADP(+) site; that span reads GAS.

The protein belongs to the tetrahydrofolate dehydrogenase/cyclohydrolase family. In terms of assembly, homodimer.

It catalyses the reaction (6R)-5,10-methylene-5,6,7,8-tetrahydrofolate + NADP(+) = (6R)-5,10-methenyltetrahydrofolate + NADPH. The catalysed reaction is (6R)-5,10-methenyltetrahydrofolate + H2O = (6R)-10-formyltetrahydrofolate + H(+). It functions in the pathway one-carbon metabolism; tetrahydrofolate interconversion. In terms of biological role, catalyzes the oxidation of 5,10-methylenetetrahydrofolate to 5,10-methenyltetrahydrofolate and then the hydrolysis of 5,10-methenyltetrahydrofolate to 10-formyltetrahydrofolate. The sequence is that of Bifunctional protein FolD from Mannheimia succiniciproducens (strain KCTC 0769BP / MBEL55E).